We begin with the raw amino-acid sequence, 225 residues long: MASNQQSYKAGETRGKAQEKTGQAMGTMRDKAEEGRDKTSQTAQTAQQKAHETAQSAKDKTSQTAQAAQQKAHETAQSAKEKTSQTAQTAQQKAHETTQAAKEKTSQAGDKAREAKDKAGSYLSETGEAIKNKAQDAAQYTKETAQGAAQYTKETAEAGRDKTGGFLSQTGEHVKQMAMGAADAVKHTFGMATEEEDKEHYPGSTTTTTATTRTTDPTHQTYQRK.

2 disordered regions span residues 1–167 and 193–225; these read MASN…GGFL and TEEEDKEHYPGSTTTTTATTRTTDPTHQTYQRK. Basic and acidic residues-rich tracts occupy residues 28–39, 49–61, 71–83, and 93–119; these read MRDKAEEGRDKT, KAHETAQSAKDKT, KAHETAQSAKEKT, and KAHETTQAAKEKTSQAGDKAREAKDKA. LEA 11-mer repeat repeat units follow at residues 53–63, 75–85, and 97–107; these read TAQSAKDKTSQ, TAQSAKEKTSQ, and TTQAAKEKTSQ. The segment covering 141–153 has biased composition (polar residues); it reads TKETAQGAAQYTK. Residues 154 to 163 are compositionally biased toward basic and acidic residues; it reads ETAEAGRDKT. A compositionally biased stretch (low complexity) spans 205–225; that stretch reads TTTTTATTRTTDPTHQTYQRK.

The protein belongs to the LEA type 4 family.

Its subcellular location is the cytoplasm. The protein localises to the cytosol. Involved dehydration tolerance. The protein is Late embryogenesis abundant protein 29 of Arabidopsis thaliana (Mouse-ear cress).